Consider the following 132-residue polypeptide: MNDTVTIRTRKFMTNRLLQRKQMVVDVLHPGKATVPKTEIREKLAKMYKTTPDVVFVFGFRTQFGGGKTTGFAMVYDSLDYAKKNEPKHRLATHGLYEKKKTSRKQRTERQNRMKKVRSIKKASVGAAGKKN.

Positions 91-132 are disordered; sequence LATHGLYEKKKTSRKQRTERQNRMKKVRSIKKASVGAAGKKN. Residues 96-112 are compositionally biased toward basic and acidic residues; the sequence is LYEKKKTSRKQRTERQN.

This sequence belongs to the eukaryotic ribosomal protein eS24 family. Component of the small ribosomal subunit.

Its subcellular location is the cytoplasm. Its function is as follows. Component of the small ribosomal subunit. The ribosome is a large ribonucleoprotein complex responsible for the synthesis of proteins in the cell. Required for processing of pre-rRNA and maturation of 40S ribosomal subunits. The chain is Small ribosomal subunit protein eS24 (rps24) from Oryzias latipes (Japanese rice fish).